Here is a 521-residue protein sequence, read N- to C-terminus: MTTRLLQLTRPHYRLLSSPFRKSSIIQRQMSASSPSPANSYLNMITKSLQHNLQTWFHFEPNEIDIIESPSHFYDLLKSKISSSQKRIFIASLYLGKSETELIDCISQALSKNPDLKVSFLLDGLRGTRELPSTCSATLLSSLVAKYGSERVDCRLYKTPAYHGWKKIVVPKRFNEGLGLQHMKIYGFDNEIILSGANLSNDYFTNRQDRYYLFKSANFANYYFKLHQLISSFSYQIVKPKVAGNVNIIWPDSNPTIEPMKNKRKFLREASQLLENFLQISKHNQPISPPGQFSTIVYPISQFTPLFPKYNDKSTEKSTILSLLSNIKNTSISWTFTAGYFNILPEIKANLLATPVTEANVITASPFANGFYQSKGVSSNLPGAYLYLSKKFLQDVSRYNKDQAITLREWQRGVVNKPNGWSYHAKGIWISSRDNNDSDSWKPFITVIGSSNYTRRAYSLDLESNALIITKDEELRNKMKGELNDLLQYTKPVTLEDFKSDPERHVGTGVKIATSVLGKKL.

91–98 lines the ATP pocket; sequence ASLYLGKS. PLD phosphodiesterase domains lie at 177-203 and 419-457; these read GLGLQHMKIYGFDNEIILSGANLSNDY and NGWSYHAKGIWISSRDNNDSDSWKPFITVIGSSNYTRRA. Active-site residues include His182, Lys184, and Asp189.

It belongs to the CDP-alcohol phosphatidyltransferase class-II family.

It is found in the mitochondrion. The enzyme catalyses a CDP-1,2-diacyl-sn-glycerol + sn-glycerol 3-phosphate = a 1,2-diacyl-sn-glycero-3-phospho-(1'-sn-glycero-3'-phosphate) + CMP + H(+). The protein operates within phospholipid metabolism; phosphatidylglycerol biosynthesis; phosphatidylglycerol from CDP-diacylglycerol: step 1/2. Essential for the viability of mitochondrial petite mutant. Catalyzes the committed step to the synthesis of the acidic phospholipids. In Saccharomyces pastorianus (Lager yeast), this protein is CDP-diacylglycerol--glycerol-3-phosphate 3-phosphatidyltransferase (PGS1).